We begin with the raw amino-acid sequence, 430 residues long: ETS domain-containing protein Elk-4 (430 aa).

The segment at residues 5-85 (ITLWQFLLQL…NGQKFVYKFV (81 aa)) is a DNA-binding region (ETS). Basic and acidic residues predominate over residues 116–127 (SKDVEYGGKERP). Residues 116 to 138 (SKDVEYGGKERPPQPGAKTSSRN) are disordered. K166 is covalently cross-linked (Glycyl lysine isopeptide (Lys-Gly) (interchain with G-Cter in SUMO2)). Disordered regions lie at residues 245–279 (TTFN…DIDT) and 292–325 (PENL…KGLE). The segment covering 249-272 (PTPPVPSTPLPLKEPPRTPSPPLS) has biased composition (pro residues). Basic and acidic residues predominate over residues 299–312 (PKNEDSALPEKDKT).

This sequence belongs to the ETS family. In terms of assembly, interacts with SIRT7. As to expression, lung and liver.

The protein resides in the nucleus. Involved in both transcriptional activation and repression. Interaction with SIRT7 leads to recruitment and stabilization of SIRT7 at promoters, followed by deacetylation of histone H3 at 'Lys-18' (H3K18Ac) and subsequent transcription repression. Forms a ternary complex with the serum response factor (SRF). Requires DNA-bound SRF for ternary complex formation and makes extensive DNA contacts to the 5'side of SRF, but does not bind DNA autonomously. In Mus musculus (Mouse), this protein is ETS domain-containing protein Elk-4 (Elk4).